A 1003-amino-acid chain; its full sequence is Glycine--tRNA ligase (1003 aa).

The segment at 1 to 310 (MSSQPLTLQD…VTAKQIPHIC (310 aa)) is glycine--tRNA ligase alpha subunit. Positions 311-1003 (QDEDFLLEIG…CFGFYAWDAL (693 aa)) are glycine--tRNA ligase beta subunit.

It belongs to the class-II aminoacyl-tRNA synthetase family.

The protein resides in the cytoplasm. It catalyses the reaction tRNA(Gly) + glycine + ATP = glycyl-tRNA(Gly) + AMP + diphosphate. The sequence is that of Glycine--tRNA ligase (glyQS) from Chlamydia muridarum (strain MoPn / Nigg).